A 684-amino-acid chain; its full sequence is DNA ligase (684 aa).

Residues 48–52 (DYEYD), 97–98 (SL), and glutamate 129 contribute to the NAD(+) site. Lysine 131 functions as the N6-AMP-lysine intermediate in the catalytic mechanism. The NAD(+) site is built by arginine 152, glutamate 189, lysine 310, and lysine 334. Residues cysteine 429, cysteine 432, cysteine 447, and cysteine 452 each coordinate Zn(2+). A BRCT domain is found at 609–684 (AQEGSLSGMS…ISWEELQAMI (76 aa)).

Belongs to the NAD-dependent DNA ligase family. LigA subfamily. Mg(2+) is required as a cofactor. It depends on Mn(2+) as a cofactor.

The catalysed reaction is NAD(+) + (deoxyribonucleotide)n-3'-hydroxyl + 5'-phospho-(deoxyribonucleotide)m = (deoxyribonucleotide)n+m + AMP + beta-nicotinamide D-nucleotide.. Its function is as follows. DNA ligase that catalyzes the formation of phosphodiester linkages between 5'-phosphoryl and 3'-hydroxyl groups in double-stranded DNA using NAD as a coenzyme and as the energy source for the reaction. It is essential for DNA replication and repair of damaged DNA. The protein is DNA ligase of Bdellovibrio bacteriovorus (strain ATCC 15356 / DSM 50701 / NCIMB 9529 / HD100).